Reading from the N-terminus, the 253-residue chain is MGQKTNPIGNRLGIIRGWDSNWYGGNDYGDKIAEDYKIRKYIHARLSKASVSKVIIERTLKLVTVTITTARPGIIIGKGGQEVDKLKEELKKVTDKEVQINIFEIKRPELDAFLVATSICRQIESRISYRRAIKMAIAASMRMNAEGIKVLISGRLNGAEMARSEGFKEGRVPLSTFRADIDYALAEAHTTYGRMGIKVWIMKGEVYGKRDLSPLAGMDKKQAGQGGGKGGDSPRGDRKPFNKGGKPDARKRK.

Residues 38 to 106 (IRKYIHARLS…EVQINIFEIK (69 aa)) form the KH type-2 domain. The tract at residues 216 to 253 (AGMDKKQAGQGGGKGGDSPRGDRKPFNKGGKPDARKRK) is disordered. Positions 232–253 (DSPRGDRKPFNKGGKPDARKRK) are enriched in basic and acidic residues.

Belongs to the universal ribosomal protein uS3 family. As to quaternary structure, part of the 30S ribosomal subunit. Forms a tight complex with proteins S10 and S14.

Functionally, binds the lower part of the 30S subunit head. Binds mRNA in the 70S ribosome, positioning it for translation. This Flavobacterium psychrophilum (strain ATCC 49511 / DSM 21280 / CIP 103535 / JIP02/86) protein is Small ribosomal subunit protein uS3.